An 880-amino-acid chain; its full sequence is Alanine--tRNA ligase (880 aa).

Residues His566, His570, Cys668, and His672 each contribute to the Zn(2+) site.

This sequence belongs to the class-II aminoacyl-tRNA synthetase family. Zn(2+) is required as a cofactor.

It is found in the cytoplasm. The catalysed reaction is tRNA(Ala) + L-alanine + ATP = L-alanyl-tRNA(Ala) + AMP + diphosphate. Its function is as follows. Catalyzes the attachment of alanine to tRNA(Ala) in a two-step reaction: alanine is first activated by ATP to form Ala-AMP and then transferred to the acceptor end of tRNA(Ala). Also edits incorrectly charged Ser-tRNA(Ala) and Gly-tRNA(Ala) via its editing domain. This Acetivibrio thermocellus (strain ATCC 27405 / DSM 1237 / JCM 9322 / NBRC 103400 / NCIMB 10682 / NRRL B-4536 / VPI 7372) (Clostridium thermocellum) protein is Alanine--tRNA ligase.